Consider the following 772-residue polypeptide: Acetamidase regulatory protein (772 aa).

Over residues Met1–Gly16 the composition is skewed to polar residues. The tract at residues Met1 to Gly23 is disordered. The zn(2)-C6 fungal-type DNA-binding region spans Ala26–Ile59. 3 disordered regions span residues Arg78 to Glu99, Ala114 to His148, and Ala627 to Val690. The span at Ala114 to Pro123 shows a compositional bias: low complexity. 2 stretches are compositionally biased toward polar residues: residues Asn124–Ala144 and Pro634–Ser658. Low complexity predominate over residues Leu671 to Pro686.

It localises to the nucleus. Its function is as follows. Positively regulates the expression of genes involved in the catabolism of certain amides, omega amino acids, and lactams. In Aspergillus fumigatus (strain ATCC MYA-4609 / CBS 101355 / FGSC A1100 / Af293) (Neosartorya fumigata), this protein is Acetamidase regulatory protein (amdR).